A 66-amino-acid polypeptide reads, in one-letter code: Small ribosomal subunit protein bS21 (66 aa).

This sequence belongs to the bacterial ribosomal protein bS21 family.

This Rickettsia peacockii (strain Rustic) protein is Small ribosomal subunit protein bS21.